The following is a 318-amino-acid chain: L-lactate dehydrogenase (318 aa).

NAD(+) is bound by residues Val18, Asp39, Lys44, Tyr69, and 83-84 (GA). Substrate-binding residues include Gln86 and Arg92. Residues Ser105, 122 to 124 (VSN), and Ser147 contribute to the NAD(+) site. 124–127 (NPVD) is a binding site for substrate. Position 152–155 (152–155 (DTSR)) interacts with substrate. The Proton acceptor role is filled by His179. Tyr225 carries the phosphotyrosine modification. Thr234 is a substrate binding site.

This sequence belongs to the LDH/MDH superfamily. LDH family. As to quaternary structure, homotetramer.

It is found in the cytoplasm. It carries out the reaction (S)-lactate + NAD(+) = pyruvate + NADH + H(+). It participates in fermentation; pyruvate fermentation to lactate; (S)-lactate from pyruvate: step 1/1. Its function is as follows. Catalyzes the conversion of lactate to pyruvate. This is L-lactate dehydrogenase from Clostridium botulinum (strain Kyoto / Type A2).